The chain runs to 67 residues: MNKIILFSAVFLALVFCAEAMPRESVNILNAENEPDDTVDIDEGLPDAFDEDYEQDGHNPYPCRGDC.

An N-terminal signal peptide occupies residues 1–20 (MNKIILFSAVFLALVFCAEA). Positions 35 to 54 (PDDTVDIDEGLPDAFDEDYE) are enriched in acidic residues. Positions 35 to 67 (PDDTVDIDEGLPDAFDEDYEQDGHNPYPCRGDC) are disordered. The Integrin-binding motif motif lies at 64–66 (RGD).

Salivary gland.

The protein localises to the secreted. Functionally, inhibits collagen- and ADP-induced host platelet aggregation by blocking the binding of host integrin alpha-IIb/beta-3 (ITGA2B/ITGB3) to fibrinogen. Inhibits the intrinsic blood coagulation pathway in the host by blocking the activity of host coagulation factor XIIa (F12). The chain is Ayadualin from Lutzomyia ayacuchensis (Sand fly).